A 237-amino-acid polypeptide reads, in one-letter code: Ubiquinone/menaquinone biosynthesis C-methyltransferase UbiE (237 aa).

Residues Thr60 and Asp80 each contribute to the S-adenosyl-L-methionine site.

It belongs to the class I-like SAM-binding methyltransferase superfamily. MenG/UbiE family.

The enzyme catalyses a 2-demethylmenaquinol + S-adenosyl-L-methionine = a menaquinol + S-adenosyl-L-homocysteine + H(+). It catalyses the reaction a 2-methoxy-6-(all-trans-polyprenyl)benzene-1,4-diol + S-adenosyl-L-methionine = a 5-methoxy-2-methyl-3-(all-trans-polyprenyl)benzene-1,4-diol + S-adenosyl-L-homocysteine + H(+). It functions in the pathway quinol/quinone metabolism; menaquinone biosynthesis; menaquinol from 1,4-dihydroxy-2-naphthoate: step 2/2. Its pathway is cofactor biosynthesis; ubiquinone biosynthesis. Its function is as follows. Methyltransferase required for the conversion of demethylmenaquinol (DMKH2) to menaquinol (MKH2) and the conversion of 2-polyprenyl-6-methoxy-1,4-benzoquinol (DDMQH2) to 2-polyprenyl-3-methyl-6-methoxy-1,4-benzoquinol (DMQH2). In Syntrophotalea carbinolica (strain DSM 2380 / NBRC 103641 / GraBd1) (Pelobacter carbinolicus), this protein is Ubiquinone/menaquinone biosynthesis C-methyltransferase UbiE.